The primary structure comprises 395 residues: Cyclin-A2 (395 aa).

The segment at 1 to 93 is disordered; sequence MLAEQENQEN…EEAADAPGLR (93 aa). Residues 27-60 are compositionally biased toward low complexity; sequence ALGLLRGGPARPGPAAQAARNGEGRGAAAGQQQQ.

This sequence belongs to the cyclin family. Cyclin AB subfamily. As to quaternary structure, interacts with the CDK1 and CDK2 protein kinases to form serine/threonine kinase holoenzyme complexes.

It localises to the nucleus. The protein resides in the cytoplasm. In terms of biological role, cyclin which controls both the G1/S and the G2/M transition phases of the cell cycle. Functions through the formation of specific serine/threonine kinase holoenzyme complexes with the cyclin-dependent protein kinases CDK1 and CDK2. The cyclin subunit confers the substrate specificity of these complexes and differentially interacts with and activates CDK1 and CDK2 throughout the cell cycle. The sequence is that of Cyclin-A2 from Gallus gallus (Chicken).